Reading from the N-terminus, the 932-residue chain is LPS-assembly protein LptD (932 aa).

A signal peptide spans 1–33 (MALKSPAFRRKFPLLVTGGLLALQPLATSYAVA). Residues 54–87 (PVNNLPPRPVHEGAAVSSGTEAASEGETADRPML) are disordered.

This sequence belongs to the LptD family. As to quaternary structure, component of the lipopolysaccharide transport and assembly complex. Interacts with LptE and LptA.

The protein localises to the cell outer membrane. In terms of biological role, together with LptE, is involved in the assembly of lipopolysaccharide (LPS) at the surface of the outer membrane. The polypeptide is LPS-assembly protein LptD (Pseudomonas putida (strain GB-1)).